Consider the following 309-residue polypeptide: tRNA pseudouridine synthase B (309 aa).

Aspartate 40 (nucleophile) is an active-site residue.

It belongs to the pseudouridine synthase TruB family. Type 1 subfamily.

It catalyses the reaction uridine(55) in tRNA = pseudouridine(55) in tRNA. Functionally, responsible for synthesis of pseudouridine from uracil-55 in the psi GC loop of transfer RNAs. This is tRNA pseudouridine synthase B from Mycobacterium avium (strain 104).